Here is a 171-residue protein sequence, read N- to C-terminus: 3-hydroxydecanoyl-[acyl-carrier-protein] dehydratase (171 aa).

The active site involves histidine 70.

Belongs to the thioester dehydratase family. FabA subfamily. As to quaternary structure, homodimer.

It localises to the cytoplasm. The enzyme catalyses a (3R)-hydroxyacyl-[ACP] = a (2E)-enoyl-[ACP] + H2O. The catalysed reaction is (3R)-hydroxydecanoyl-[ACP] = (2E)-decenoyl-[ACP] + H2O. It catalyses the reaction (2E)-decenoyl-[ACP] = (3Z)-decenoyl-[ACP]. The protein operates within lipid metabolism; fatty acid biosynthesis. Its function is as follows. Necessary for the introduction of cis unsaturation into fatty acids. Catalyzes the dehydration of (3R)-3-hydroxydecanoyl-ACP to E-(2)-decenoyl-ACP and then its isomerization to Z-(3)-decenoyl-ACP. Can catalyze the dehydratase reaction for beta-hydroxyacyl-ACPs with saturated chain lengths up to 16:0, being most active on intermediate chain length. This chain is 3-hydroxydecanoyl-[acyl-carrier-protein] dehydratase, found in Pseudomonas fluorescens (strain ATCC BAA-477 / NRRL B-23932 / Pf-5).